Here is a 381-residue protein sequence, read N- to C-terminus: Homoserine O-succinyltransferase (381 aa).

The 316-residue stretch at asparagine 45 to aspartate 360 folds into the AB hydrolase-1 domain. The Nucleophile role is filled by serine 151. Residue arginine 221 coordinates substrate. Active-site residues include aspartate 321 and histidine 354. Aspartate 355 serves as a coordination point for substrate.

Belongs to the AB hydrolase superfamily. MetX family. In terms of assembly, homodimer.

The protein localises to the cytoplasm. The enzyme catalyses L-homoserine + succinyl-CoA = O-succinyl-L-homoserine + CoA. Its pathway is amino-acid biosynthesis; L-methionine biosynthesis via de novo pathway; O-succinyl-L-homoserine from L-homoserine: step 1/1. Transfers a succinyl group from succinyl-CoA to L-homoserine, forming succinyl-L-homoserine. The polypeptide is Homoserine O-succinyltransferase (Burkholderia ambifaria (strain MC40-6)).